We begin with the raw amino-acid sequence, 591 residues long: 2-succinyl-5-enolpyruvyl-6-hydroxy-3-cyclohexene-1-carboxylate synthase (591 aa).

This sequence belongs to the TPP enzyme family. MenD subfamily. Homodimer. The cofactor is Mg(2+). Mn(2+) serves as cofactor. Thiamine diphosphate is required as a cofactor.

The enzyme catalyses isochorismate + 2-oxoglutarate + H(+) = 5-enolpyruvoyl-6-hydroxy-2-succinyl-cyclohex-3-ene-1-carboxylate + CO2. It participates in quinol/quinone metabolism; 1,4-dihydroxy-2-naphthoate biosynthesis; 1,4-dihydroxy-2-naphthoate from chorismate: step 2/7. The protein operates within cofactor biosynthesis; phylloquinone biosynthesis. In terms of biological role, catalyzes the thiamine diphosphate-dependent decarboxylation of 2-oxoglutarate and the subsequent addition of the resulting succinic semialdehyde-thiamine pyrophosphate anion to isochorismate to yield 2-succinyl-5-enolpyruvyl-6-hydroxy-3-cyclohexene-1-carboxylate (SEPHCHC). This Rippkaea orientalis (strain PCC 8801 / RF-1) (Cyanothece sp. (strain PCC 8801)) protein is 2-succinyl-5-enolpyruvyl-6-hydroxy-3-cyclohexene-1-carboxylate synthase.